We begin with the raw amino-acid sequence, 94 residues long: Exodeoxyribonuclease 7 small subunit (94 aa).

Belongs to the XseB family. As to quaternary structure, heterooligomer composed of large and small subunits.

It localises to the cytoplasm. It carries out the reaction Exonucleolytic cleavage in either 5'- to 3'- or 3'- to 5'-direction to yield nucleoside 5'-phosphates.. Functionally, bidirectionally degrades single-stranded DNA into large acid-insoluble oligonucleotides, which are then degraded further into small acid-soluble oligonucleotides. The protein is Exodeoxyribonuclease 7 small subunit of Ralstonia nicotianae (strain ATCC BAA-1114 / GMI1000) (Ralstonia solanacearum).